Reading from the N-terminus, the 404-residue chain is HAGGKFDGGGYKVSGGLHGVGASVVNALSTELEVFVHRDGKIHYQKYERGVPAADLRVIGETDRTGTITRFKPDSEIFTETTEYEFDTLATRMRELAFLNRNIKLTIEDKREHKQKKEFHYEGGIKSYVEHLNRSKQPIHEEPVYVDGSKDGIQVEVALQYNEGYTNHIYSFTNNIHTYEGGTHEVGFKTALTRVINDYGRKNNILKDADSNLTGEDVREGLTAIVSIKHPNPQFEGQTKTKLGNSEARTITESVFSEAFEKFLLENPNVARKIIDKGTMAARARVAAKKARELTRRKSALEVSSLPGKLADCSSKDPAISEIYIVEGDSAGGSAKQGRDRHFQAILPLKGKIINVEKARLDKILSNDEVRTIITAIGTNIGGDFAIEKARYHKVIIMTDADVD.

A Toprim domain is found at Ser321–Asp404. Residues Glu327, Asp400, and Asp402 each contribute to the Mg(2+) site.

The protein belongs to the type II topoisomerase GyrB family. In terms of assembly, heterotetramer, composed of two GyrA and two GyrB chains. In the heterotetramer, GyrA contains the active site tyrosine that forms a transient covalent intermediate with DNA, while GyrB binds cofactors and catalyzes ATP hydrolysis. It depends on Mg(2+) as a cofactor. The cofactor is Mn(2+). Ca(2+) serves as cofactor.

The protein localises to the cytoplasm. The enzyme catalyses ATP-dependent breakage, passage and rejoining of double-stranded DNA.. Its function is as follows. A type II topoisomerase that negatively supercoils closed circular double-stranded (ds) DNA in an ATP-dependent manner to modulate DNA topology and maintain chromosomes in an underwound state. Negative supercoiling favors strand separation, and DNA replication, transcription, recombination and repair, all of which involve strand separation. Also able to catalyze the interconversion of other topological isomers of dsDNA rings, including catenanes and knotted rings. Type II topoisomerases break and join 2 DNA strands simultaneously in an ATP-dependent manner. The sequence is that of DNA gyrase subunit B (gyrB) from Bacillus mycoides.